The chain runs to 65 residues: UPF0434 protein BH12860 (65 aa).

The protein belongs to the UPF0434 family.

In Bartonella henselae (strain ATCC 49882 / DSM 28221 / CCUG 30454 / Houston 1) (Rochalimaea henselae), this protein is UPF0434 protein BH12860.